An 87-amino-acid polypeptide reads, in one-letter code: Asparagine--tRNA ligase, cytoplasmic (87 aa).

This sequence belongs to the class-II aminoacyl-tRNA synthetase family.

It is found in the cytoplasm. It carries out the reaction tRNA(Asn) + L-asparagine + ATP = L-asparaginyl-tRNA(Asn) + AMP + diphosphate + H(+). This chain is Asparagine--tRNA ligase, cytoplasmic (DED81), found in Saccharomyces paradoxus (Yeast).